The sequence spans 88 residues: Kunitz-type U15-theraphotoxin-Hhn1i (88 aa).

An N-terminal signal peptide occupies residues 1-27; that stretch reads MGTARFLRAVLLLSVLLMVTFPALLSA. A propeptide spanning residues 28-33 is cleaved from the precursor; sequence EHHDGR. One can recognise a BPTI/Kunitz inhibitor domain in the interval 37–85; the sequence is CRLPSDSGDCLRFFEMRYFDGTTCTKFVYGGYGGNDNRFPTEKACMKRC. Cystine bridges form between Cys-37–Cys-85 and Cys-60–Cys-81.

The protein belongs to the venom Kunitz-type family. 03 (sub-Kunitz) subfamily. In terms of tissue distribution, expressed by the venom gland.

The protein localises to the secreted. Serine protease inhibitor that inhibits trypsin at a molar ratio of 1:1. The protein is Kunitz-type U15-theraphotoxin-Hhn1i of Cyriopagopus hainanus (Chinese bird spider).